A 482-amino-acid chain; its full sequence is Glutamyl-tRNA(Gln) amidotransferase subunit A (482 aa).

Catalysis depends on charge relay system residues lysine 74 and serine 149. Serine 173 serves as the catalytic Acyl-ester intermediate.

It belongs to the amidase family. GatA subfamily. As to quaternary structure, heterotrimer of A, B and C subunits.

The enzyme catalyses L-glutamyl-tRNA(Gln) + L-glutamine + ATP + H2O = L-glutaminyl-tRNA(Gln) + L-glutamate + ADP + phosphate + H(+). In terms of biological role, allows the formation of correctly charged Gln-tRNA(Gln) through the transamidation of misacylated Glu-tRNA(Gln) in organisms which lack glutaminyl-tRNA synthetase. The reaction takes place in the presence of glutamine and ATP through an activated gamma-phospho-Glu-tRNA(Gln). The sequence is that of Glutamyl-tRNA(Gln) amidotransferase subunit A from Prochlorococcus marinus (strain AS9601).